Reading from the N-terminus, the 288-residue chain is Alpha/beta hydrolase domain-containing protein 17B (288 aa).

Active-site charge relay system residues include Ser-170, Asp-235, and His-264. Ser-282 bears the Phosphoserine mark.

This sequence belongs to the AB hydrolase superfamily. ABHD17 family. Post-translationally, palmitoylated on cysteine residues located in a cysteine cluster at the N-terminus which promotes membrane localization. Palmitoylation is required for post-synaptic localization and for depalmitoylating activity towards DLG4/PSD95.

It localises to the cell membrane. The protein localises to the recycling endosome membrane. It is found in the cell projection. The protein resides in the dendritic spine. Its subcellular location is the postsynaptic density membrane. The catalysed reaction is S-hexadecanoyl-L-cysteinyl-[protein] + H2O = L-cysteinyl-[protein] + hexadecanoate + H(+). Inhibited by palmostatin-B. Its function is as follows. Hydrolyzes fatty acids from S-acylated cysteine residues in proteins. Has depalmitoylating activity towards DLG4/PSD95. Has depalmitoylating activity towards GAP43. Has depalmitoylating activity towards MAP6. Has depalmitoylating activity towards NRAS. In Homo sapiens (Human), this protein is Alpha/beta hydrolase domain-containing protein 17B.